The following is a 688-amino-acid chain: MTAQNFLAEIGTEELPPKALKKLATAFAENVEQELNQAGLAFEKVEWFAAPRRLAVKVLGLAEAQPSKQVEKRGPAVSAAFDAEGKPTKAAEGWARGCGITVEQAERLATDKGEWLVHRAVIEGQPTKNLLVGIIDKALAGLPIPKTMRWGDKTEQFVRPVHTVTLLFGADLIEGEILGVASGRTVRGHRFLGEREFSLDHADQYPQLLKERGSVVADFNERKALILATSQEKATALGGVADIEEELLEEVTSLVEYPNVLTAKFEERFLAVPAEALVYTMKGDQKYFPIYDKDGKLLPHFIFVSNINPDDPSKIIEGNEKVVRPRLTDAEFFFKTDLKQKLEDRLPRLETVLFQQQLGTLRDKTARIEALAGEIAAQIGADQTKAKRAGLLSKCDLMTNMVFEFTDTQGVMGMHYARHDGEDEDVAVALNEQYMPRFAGDTLPNSLVACSVALADKIDTLTGIFGIGQSPKGSADPFALRRAALGCLRIIVEKNLPLDLVDIVAKATALFGDKLTNKNVVDEVVDFMLGRFRAWYESEGIAVDVIQSVLARRPTKPADFDARVRAVSHFRTLDSAEALAAANKRVSNILAKADIAIGEIDLGVCVESAEKTLAEAVIALKGEVQPLIAQGDYTAVLDKLANLRQPIDAFFDGVMVNVEEQTLRQNRLAILSTLQNLFLQVADISVLQ.

It belongs to the class-II aminoacyl-tRNA synthetase family. Tetramer of two alpha and two beta subunits.

The protein resides in the cytoplasm. The catalysed reaction is tRNA(Gly) + glycine + ATP = glycyl-tRNA(Gly) + AMP + diphosphate. This Histophilus somni (strain 2336) (Haemophilus somnus) protein is Glycine--tRNA ligase beta subunit.